The primary structure comprises 331 residues: Glucokinase (331 aa).

13–18 (GDIGGT) serves as a coordination point for ATP.

It belongs to the bacterial glucokinase family.

Its subcellular location is the cytoplasm. It carries out the reaction D-glucose + ATP = D-glucose 6-phosphate + ADP + H(+). This Caulobacter vibrioides (strain ATCC 19089 / CIP 103742 / CB 15) (Caulobacter crescentus) protein is Glucokinase.